Reading from the N-terminus, the 177-residue chain is Transcription termination/antitermination protein NusG (177 aa).

In terms of domain architecture, KOW spans Pro-126 to Val-156.

It belongs to the NusG family.

Participates in transcription elongation, termination and antitermination. The sequence is that of Transcription termination/antitermination protein NusG from Pseudomonas aeruginosa (strain ATCC 15692 / DSM 22644 / CIP 104116 / JCM 14847 / LMG 12228 / 1C / PRS 101 / PAO1).